Reading from the N-terminus, the 822-residue chain is Phenylalanine--tRNA ligase beta subunit (822 aa).

Residues 39-150 enclose the tRNA-binding domain; it reads ADRLVGFRTA…ETAPIGESYA (112 aa). The B5 domain occupies 399–502; the sequence is DWKRTARLRF…RLYGLDNVPA (104 aa). Residues D486, E489, and E490 each contribute to the Mg(2+) site. The FDX-ACB domain occupies 728–821; that stretch reads SPLQPVRRDF…VLKATGAVLR (94 aa).

It belongs to the phenylalanyl-tRNA synthetase beta subunit family. Type 1 subfamily. In terms of assembly, tetramer of two alpha and two beta subunits. Requires Mg(2+) as cofactor.

The protein localises to the cytoplasm. It catalyses the reaction tRNA(Phe) + L-phenylalanine + ATP = L-phenylalanyl-tRNA(Phe) + AMP + diphosphate + H(+). The protein is Phenylalanine--tRNA ligase beta subunit of Gluconobacter oxydans (strain 621H) (Gluconobacter suboxydans).